Reading from the N-terminus, the 282-residue chain is MSNKTIDLGSIEIANDKPFVLFGGMNVLESRDLAMQIAETYAEVTQKLGIPYVFKASFDKANRSSVNSYRGPGMEEGLKIFEEIKSTFNLPLITDVHEVHQCAPVAEVVDIIQLPAFLARQTDLVVAMAKTGAIINVKKPQFLAPHEMRHIISKFNEAGNDEIILCERGSSFGYNNLVVDMLGMDEMKQSGYPVIFDATHALQKPGGRSDSAGGRRAQATELARSGMALGLAGLFIEAHPDPDNAKCDGPCALPLHQLENYLTQMKAVDDLVKSFAPIDTSK.

This sequence belongs to the KdsA family.

Its subcellular location is the cytoplasm. It catalyses the reaction D-arabinose 5-phosphate + phosphoenolpyruvate + H2O = 3-deoxy-alpha-D-manno-2-octulosonate-8-phosphate + phosphate. It functions in the pathway carbohydrate biosynthesis; 3-deoxy-D-manno-octulosonate biosynthesis; 3-deoxy-D-manno-octulosonate from D-ribulose 5-phosphate: step 2/3. The protein operates within bacterial outer membrane biogenesis; lipopolysaccharide biosynthesis. The chain is 2-dehydro-3-deoxyphosphooctonate aldolase from Shewanella piezotolerans (strain WP3 / JCM 13877).